The primary structure comprises 282 residues: Shikimate kinase (282 aa).

86-96 (PIKSGLSSSSA) contributes to the ATP binding site.

Belongs to the GHMP kinase family. Archaeal shikimate kinase subfamily.

It is found in the cytoplasm. It carries out the reaction shikimate + ATP = 3-phosphoshikimate + ADP + H(+). The protein operates within metabolic intermediate biosynthesis; chorismate biosynthesis; chorismate from D-erythrose 4-phosphate and phosphoenolpyruvate: step 5/7. The chain is Shikimate kinase (aroK) from Methanocaldococcus jannaschii (strain ATCC 43067 / DSM 2661 / JAL-1 / JCM 10045 / NBRC 100440) (Methanococcus jannaschii).